Consider the following 679-residue polypeptide: Methionine--tRNA ligase (679 aa).

A 'HIGH' region motif is present at residues 14-24 (PYANGSIHLGH). Residues C145, C148, C158, and C161 each coordinate Zn(2+). Positions 331–335 (KMSKS) match the 'KMSKS' region motif. An ATP-binding site is contributed by K334. Residues 577–679 (AFAAVDLRIA…SGAKPGQRVK (103 aa)) form the tRNA-binding domain.

This sequence belongs to the class-I aminoacyl-tRNA synthetase family. MetG type 1 subfamily. As to quaternary structure, homodimer. Requires Zn(2+) as cofactor.

The protein localises to the cytoplasm. The catalysed reaction is tRNA(Met) + L-methionine + ATP = L-methionyl-tRNA(Met) + AMP + diphosphate. Functionally, is required not only for elongation of protein synthesis but also for the initiation of all mRNA translation through initiator tRNA(fMet) aminoacylation. In Pseudomonas paraeruginosa (strain DSM 24068 / PA7) (Pseudomonas aeruginosa (strain PA7)), this protein is Methionine--tRNA ligase.